A 367-amino-acid polypeptide reads, in one-letter code: 2-aminoethylphosphonate--pyruvate transaminase (367 aa).

Position 194 is an N6-(pyridoxal phosphate)lysine (K194).

This sequence belongs to the class-V pyridoxal-phosphate-dependent aminotransferase family. PhnW subfamily. In terms of assembly, homodimer. The cofactor is pyridoxal 5'-phosphate.

It catalyses the reaction (2-aminoethyl)phosphonate + pyruvate = phosphonoacetaldehyde + L-alanine. Involved in phosphonate degradation. This is 2-aminoethylphosphonate--pyruvate transaminase from Salmonella paratyphi A (strain ATCC 9150 / SARB42).